The following is a 353-amino-acid chain: Probable cytochrome c oxidase subunit 2 (353 aa).

The N-terminal stretch at 1 to 42 (MTARELVCSQRVGQGLSRRLRPLVLAVTLGVLVVTLSGCSWS) is a signal peptide. 2 consecutive transmembrane segments (helical) span residues 63–83 (LWIG…GLIF) and 110–130 (LVLT…TVIV). 4 residues coordinate Cu cation: histidine 246, cysteine 287, cysteine 291, and histidine 295.

Belongs to the cytochrome c oxidase subunit 2 family. Cu cation serves as cofactor. The cofactor is heme.

Its subcellular location is the cell membrane. It catalyses the reaction 4 Fe(II)-[cytochrome c] + O2 + 8 H(+)(in) = 4 Fe(III)-[cytochrome c] + 2 H2O + 4 H(+)(out). Its function is as follows. Subunits I and II form the functional core of the enzyme complex. Electrons originating in cytochrome c are transferred via heme a and Cu(A) to the binuclear center formed by heme a3 and Cu(B). This chain is Probable cytochrome c oxidase subunit 2 (ctaC), found in Mycobacterium leprae (strain TN).